The following is a 1327-amino-acid chain: uncharacterized protein (1327 aa).

884 to 885 (WD) is a substrate binding site. Glu1023 (proton donor) is an active-site residue. A substrate-binding site is contributed by 1143–1144 (KQ).

The protein in the N-terminal section; belongs to the trehalose phosphatase family. This sequence in the C-terminal section; belongs to the glycosyl hydrolase 65 family.

This is an uncharacterized protein from Mycobacterium tuberculosis (strain CDC 1551 / Oshkosh).